We begin with the raw amino-acid sequence, 508 residues long: Aspartic proteinase A3 (508 aa).

Positions 1-25 (MGTRFQSFLLVFLLSCLILISTASC) are cleaved as a signal peptide. Positions 26–69 (ERNGDGTIRIGLKKRKLDRSNRLASQLFLKNRGSHWSPKHYFRL) are cleaved as a propeptide — activation peptide. Positions 87–505 (YYGDITIGTP…DYGKGRVGFA (419 aa)) constitute a Peptidase A1 domain. D105 is an active-site residue. Cystine bridges form between C118-C124 and C283-C287. D292 is an active-site residue. Residues 317 to 419 (IVSRECKAVV…AELCDHIPTQ (103 aa)) enclose the Saposin B-type domain. Cystine bridges form between C322–C413, C347–C385, C353–C382, and C427–C464. N-linked (GlcNAc...) asparagine glycosylation is present at N399.

The protein belongs to the peptidase A1 family. Expressed in petals, carpels and seed pods.

The protein resides in the secreted. Involved in the processing and degradation of storage proteins. The sequence is that of Aspartic proteinase A3 (APA3) from Arabidopsis thaliana (Mouse-ear cress).